Reading from the N-terminus, the 686-residue chain is DNA ligase 2 (686 aa).

NAD(+) contacts are provided by residues 37–41 (DDEYD), 86–87 (SL), and Glu-121. The active-site N6-AMP-lysine intermediate is the Lys-123. Residues Arg-144, Glu-179, Lys-295, and Lys-319 each contribute to the NAD(+) site. Residues Cys-413, Cys-416, Cys-431, and Cys-436 each contribute to the Zn(2+) site. Positions 593–681 (VRGEQLAGLN…GVQLPGVQAS (89 aa)) constitute a BRCT domain.

Belongs to the NAD-dependent DNA ligase family. LigA subfamily. Mg(2+) is required as a cofactor. It depends on Mn(2+) as a cofactor.

It catalyses the reaction NAD(+) + (deoxyribonucleotide)n-3'-hydroxyl + 5'-phospho-(deoxyribonucleotide)m = (deoxyribonucleotide)n+m + AMP + beta-nicotinamide D-nucleotide.. In terms of biological role, DNA ligase that catalyzes the formation of phosphodiester linkages between 5'-phosphoryl and 3'-hydroxyl groups in double-stranded DNA using NAD as a coenzyme and as the energy source for the reaction. It is essential for DNA replication and repair of damaged DNA. This chain is DNA ligase 2, found in Deinococcus deserti (strain DSM 17065 / CIP 109153 / LMG 22923 / VCD115).